Consider the following 324-residue polypeptide: tRNA U34 carboxymethyltransferase (324 aa).

Carboxy-S-adenosyl-L-methionine contacts are provided by residues lysine 92, tryptophan 106, lysine 111, glycine 131, 153-155 (DPS), methionine 197, tyrosine 201, and arginine 316.

This sequence belongs to the class I-like SAM-binding methyltransferase superfamily. CmoB family. In terms of assembly, homotetramer.

It catalyses the reaction carboxy-S-adenosyl-L-methionine + 5-hydroxyuridine(34) in tRNA = 5-carboxymethoxyuridine(34) in tRNA + S-adenosyl-L-homocysteine + H(+). Catalyzes carboxymethyl transfer from carboxy-S-adenosyl-L-methionine (Cx-SAM) to 5-hydroxyuridine (ho5U) to form 5-carboxymethoxyuridine (cmo5U) at position 34 in tRNAs. This is tRNA U34 carboxymethyltransferase from Hahella chejuensis (strain KCTC 2396).